A 167-amino-acid polypeptide reads, in one-letter code: Menaquinol:cytochrome c reductase iron-sulfur subunit (167 aa).

One can recognise a Rieske domain in the interval 59–158 (TKEPQRFDFK…QEVKDGFLYL (100 aa)). The [2Fe-2S] cluster site is built by cysteine 100, histidine 102, cysteine 121, and histidine 124. An intrachain disulfide couples cysteine 105 to cysteine 123.

It belongs to the Rieske iron-sulfur protein family. As to quaternary structure, the main subunits of the menaquinol:cytochrome c complex are a Rieske-type iron-sulfur protein (QcrA), a cytochrome b (QcrB) and a cytochrome c (QcrC). It depends on [2Fe-2S] cluster as a cofactor.

Component of the menaquinol:cytochrome c reductase complex. The Rieske protein is a high potential 2Fe-2S protein. The polypeptide is Menaquinol:cytochrome c reductase iron-sulfur subunit (qcrA) (Bacillus subtilis (strain 168)).